A 430-amino-acid polypeptide reads, in one-letter code: RPM1 interacting protein 13 (430 aa).

Residues 1–21 (MGSGNHVDIVDVSSGEEDVDT) form a disordered region. The interval 231 to 300 (RHRIRQPIPH…QVSQSSHHSS (70 aa)) is nuclear localization.

Interacts with RPM1 (via its NB-ARC domain). Binds to ARF1 in the nucleus.

It is found in the nucleus. In terms of biological role, resistance protein interactor which positively enhances RPM1-mediated resistance to necrotrophic bacterial pathogens Pseudomonas syringae pv. tomato DC3000 harboring type III effector protein AvrRpm1 or AvrB, but prevents the hypersensitive response (HR) controlled by RPM1. Together with ARF1, promotes leaf senescence and cell death, probably by facilitating the translocation of ARF1 into the nucleus, and activates ROS-related enzymes (e.g. POD, CAT and SOD). In Arabidopsis thaliana (Mouse-ear cress), this protein is RPM1 interacting protein 13.